A 1323-amino-acid chain; its full sequence is ABC transporter gloK (1323 aa).

The next 7 membrane-spanning stretches (helical) occupy residues 6–26, 102–122, 138–158, 217–237, 240–260, 325–345, and 359–379; these read AIAS…TLEA, PHAL…AGIL, VAYG…VMST, IWAS…RLGV, VAAV…VFGF, LLVG…VFAF, and PLLA…GQAV. Residues 142-380 enclose the ABC transmembrane type-1 1 domain; that stretch reads LIAAYAIVYI…IFSLLGQAVS (239 aa). In terms of domain architecture, ABC transporter 1 spans 471-697; it reads IRDCSACWSK…SSYLESLGTR (227 aa). Residue 503-510 coordinates ATP; the sequence is GPIGSGKS. 7 consecutive transmembrane segments (helical) span residues 748-768, 795-815, 821-841, 859-879, 891-910, 976-996, and 1006-1026; these read GWVT…GLVF, YALW…WLMI, AAIQ…LVYF, LIDM…LSCI, YVAA…QLFY, LNLT…SIAL, and IGVA…LVYT. An ABC transmembrane type-1 2 domain is found at 752-1031; it reads WWVFVLLCSG…TLVYTWTSLE (280 aa). The ABC transporter 2 domain occupies 1069–1300; that stretch reads IRFQSVSAAY…PSFFASLLKA (232 aa). 1103–1110 lines the ATP pocket; the sequence is GRTGSGKS.

It belongs to the ABC transporter superfamily. ABCC family. Conjugate transporter (TC 3.A.1.208) subfamily.

The protein resides in the cell membrane. Its function is as follows. 3-isopropylmalate dehydratase large subunit; part of the gene cluster that mediates the biosynthesis of pneumocandins, lipohexapeptides of the echinocandin family that prevent fungal cell wall formation by non-competitive inhibition of beta-1,3-glucan synthase. Possibly secretes antifungal pneumocandins, thus avoiding of intracellular accumulation and ameliorating the toxicity to the producing cells. In Glarea lozoyensis (strain ATCC 20868 / MF5171), this protein is ABC transporter gloK.